We begin with the raw amino-acid sequence, 182 residues long: Isopentenyl-diphosphate Delta-isomerase (182 aa).

Mn(2+) is bound by residues histidine 25 and histidine 32. The region spanning 30–164 is the Nudix hydrolase domain; it reads LLHLAFSSWL…PWAFSPWMVM (135 aa). The active site involves cysteine 67. Histidine 69 contacts Mn(2+). Glutamate 87 is a Mg(2+) binding site. Glutamate 114 and glutamate 116 together coordinate Mn(2+). Glutamate 116 is a catalytic residue.

It belongs to the IPP isomerase type 1 family. As to quaternary structure, homodimer. It depends on Mg(2+) as a cofactor. The cofactor is Mn(2+).

It localises to the cytoplasm. The enzyme catalyses isopentenyl diphosphate = dimethylallyl diphosphate. It participates in isoprenoid biosynthesis; dimethylallyl diphosphate biosynthesis; dimethylallyl diphosphate from isopentenyl diphosphate: step 1/1. Its function is as follows. Catalyzes the 1,3-allylic rearrangement of the homoallylic substrate isopentenyl (IPP) to its highly electrophilic allylic isomer, dimethylallyl diphosphate (DMAPP). The protein is Isopentenyl-diphosphate Delta-isomerase of Escherichia coli (strain SMS-3-5 / SECEC).